A 756-amino-acid polypeptide reads, in one-letter code: uncharacterized protein (756 aa).

This is an uncharacterized protein from Mycoplasma genitalium (strain ATCC 33530 / DSM 19775 / NCTC 10195 / G37) (Mycoplasmoides genitalium).